The chain runs to 391 residues: Alkanesulfonate monooxygenase (391 aa).

Belongs to the SsuD family.

The enzyme catalyses an alkanesulfonate + FMNH2 + O2 = an aldehyde + FMN + sulfite + H2O + 2 H(+). Functionally, catalyzes the desulfonation of aliphatic sulfonates. This chain is Alkanesulfonate monooxygenase, found in Methylorubrum extorquens (strain CM4 / NCIMB 13688) (Methylobacterium extorquens).